The chain runs to 361 residues: Molybdenum import ATP-binding protein ModC (361 aa).

An ABC transporter domain is found at 1–228 (MLNINIEKQF…EQMRPWVPLQ (228 aa)). 31 to 38 (GRSGAGKT) contacts ATP. The Mop domain maps to 289-356 (GSSIRNLLRG…IKGVTMTQMD (68 aa)).

It belongs to the ABC transporter superfamily. Molybdate importer (TC 3.A.1.8) family. The complex is composed of two ATP-binding proteins (ModC), two transmembrane proteins (ModB) and a solute-binding protein (ModA).

Its subcellular location is the cell inner membrane. The catalysed reaction is molybdate(out) + ATP + H2O = molybdate(in) + ADP + phosphate + H(+). Functionally, part of the ABC transporter complex ModABC involved in molybdenum import. Responsible for energy coupling to the transport system. The protein is Molybdenum import ATP-binding protein ModC of Shewanella sp. (strain MR-4).